We begin with the raw amino-acid sequence, 146 residues long: Large ribosomal subunit protein uL15 (146 aa).

Positions 1–10 are enriched in basic and acidic residues; it reads MTIKLHDLKP. Residues 1–52 form a disordered region; it reads MTIKLHDLKPARGSKTPRTRVGRGEGSKGKTAGRGTKGTKARKNVPVTFEGG.

It belongs to the universal ribosomal protein uL15 family. Part of the 50S ribosomal subunit.

In terms of biological role, binds to the 23S rRNA. The protein is Large ribosomal subunit protein uL15 of Mycolicibacterium paratuberculosis (strain ATCC BAA-968 / K-10) (Mycobacterium paratuberculosis).